We begin with the raw amino-acid sequence, 439 residues long: Magnesium-dependent glutamate N-prenyltransferase (439 aa).

Residues asparagine 322, threonine 326, glutamate 330, and phenylalanine 337 each coordinate Mg(2+).

Belongs to the terpene synthase family. Mg(2+) serves as cofactor.

The catalysed reaction is dimethylallyl diphosphate + L-glutamate = prekainate + diphosphate. The protein operates within secondary metabolite biosynthesis. Its function is as follows. Magnesium-dependent glutamate N-prenyltransferase: part of the gene cluster that mediates the biosynthesis of kainic acid (KA) and derivatives, natural products with neurochemical activity acting as ionotropic glutamate receptor (iGluR) agonists, thus being neurotoxins. Catalyzes the conversion of L-glutamic acid (L-Glu) to prekainic acid in the presence of dimethylallyl diphosphate (DMAPP). Can also use geranyl diphosphate (GPP) as substrate, thus leading to the formation of N-geranyl-L-glutamic acid (L-NGG). The sequence is that of Magnesium-dependent glutamate N-prenyltransferase from Digenea simplex (Marine red alga).